The following is a 413-amino-acid chain: Probable tRNA sulfurtransferase (413 aa).

Residues T61 to K171 form the THUMP domain. ATP contacts are provided by residues M189–L190, H214–F215, R275, G297, and Q306.

Belongs to the ThiI family.

It is found in the cytoplasm. It catalyses the reaction [ThiI sulfur-carrier protein]-S-sulfanyl-L-cysteine + a uridine in tRNA + 2 reduced [2Fe-2S]-[ferredoxin] + ATP + H(+) = [ThiI sulfur-carrier protein]-L-cysteine + a 4-thiouridine in tRNA + 2 oxidized [2Fe-2S]-[ferredoxin] + AMP + diphosphate. The enzyme catalyses [ThiS sulfur-carrier protein]-C-terminal Gly-Gly-AMP + S-sulfanyl-L-cysteinyl-[cysteine desulfurase] + AH2 = [ThiS sulfur-carrier protein]-C-terminal-Gly-aminoethanethioate + L-cysteinyl-[cysteine desulfurase] + A + AMP + 2 H(+). It functions in the pathway cofactor biosynthesis; thiamine diphosphate biosynthesis. In terms of biological role, catalyzes the ATP-dependent transfer of a sulfur to tRNA to produce 4-thiouridine in position 8 of tRNAs, which functions as a near-UV photosensor. Also catalyzes the transfer of sulfur to the sulfur carrier protein ThiS, forming ThiS-thiocarboxylate. This is a step in the synthesis of thiazole, in the thiamine biosynthesis pathway. The sulfur is donated as persulfide by IscS. The chain is Probable tRNA sulfurtransferase from Natranaerobius thermophilus (strain ATCC BAA-1301 / DSM 18059 / JW/NM-WN-LF).